The sequence spans 224 residues: Holliday junction branch migration complex subunit RuvA (224 aa).

The domain I stretch occupies residues Met1–Pro64. A domain II region spans residues Thr65 to Ala143. Positions Gly141 to Asn185 are disordered. The tract at residues Ala144–Pro170 is flexible linker. The interval Pro171–Ser224 is domain III.

Belongs to the RuvA family. In terms of assembly, homotetramer. Forms an RuvA(8)-RuvB(12)-Holliday junction (HJ) complex. HJ DNA is sandwiched between 2 RuvA tetramers; dsDNA enters through RuvA and exits via RuvB. An RuvB hexamer assembles on each DNA strand where it exits the tetramer. Each RuvB hexamer is contacted by two RuvA subunits (via domain III) on 2 adjacent RuvB subunits; this complex drives branch migration. In the full resolvosome a probable DNA-RuvA(4)-RuvB(12)-RuvC(2) complex forms which resolves the HJ.

The protein resides in the cytoplasm. The RuvA-RuvB-RuvC complex processes Holliday junction (HJ) DNA during genetic recombination and DNA repair, while the RuvA-RuvB complex plays an important role in the rescue of blocked DNA replication forks via replication fork reversal (RFR). RuvA specifically binds to HJ cruciform DNA, conferring on it an open structure. The RuvB hexamer acts as an ATP-dependent pump, pulling dsDNA into and through the RuvAB complex. HJ branch migration allows RuvC to scan DNA until it finds its consensus sequence, where it cleaves and resolves the cruciform DNA. This chain is Holliday junction branch migration complex subunit RuvA, found in Cereibacter sphaeroides (strain ATCC 17029 / ATH 2.4.9) (Rhodobacter sphaeroides).